Reading from the N-terminus, the 636-residue chain is Molybdenum cofactor biosynthesis protein 1 (636 aa).

The interval 1-383 (MAARPAFGIV…QMKNRPMILI (383 aa)) is molybdenum cofactor biosynthesis protein A. Positions 19–40 (RGCSSGAPVTQPRPGEPSRPTR) are disordered. Ser64 carries the post-translational modification Phosphoserine. In terms of domain architecture, Radical SAM core spans 64-279 (SFGRQHSYLR…TIRQRWPGLE (216 aa)). GTP is bound at residue Arg73. Positions 80 and 84 each coordinate [4Fe-4S] cluster. Tyr86 is an S-adenosyl-L-methionine binding site. Residue Cys87 coordinates [4Fe-4S] cluster. Position 123 (Arg123) interacts with GTP. S-adenosyl-L-methionine is bound at residue Gly127. Thr154 provides a ligand contact to GTP. An S-adenosyl-L-methionine-binding site is contributed by Ser178. Lys198 bears the N6-acetyllysine mark. Lys215 provides a ligand contact to GTP. Met249 is an S-adenosyl-L-methionine binding site. Residues Cys312 and Cys315 each contribute to the [4Fe-4S] cluster site. A GTP-binding site is contributed by 317-319 (RLR). Residue Cys329 coordinates [4Fe-4S] cluster. The molybdenum cofactor biosynthesis protein C stretch occupies residues 414–636 (QCLSDQMASL…GGQRGDFHRA (223 aa)). The interval 444-484 (SPQRHYSSYPDPDTHSKCLSTGSQAPDAPSGPGPTSNQLTH) is disordered. Lys528 bears the N6-acetyllysine mark. Asp606 functions as the For molybdenum cofactor biosynthesis protein C activity in the catalytic mechanism.

In the C-terminal section; belongs to the MoaC family. This sequence in the N-terminal section; belongs to the radical SAM superfamily. MoaA family. In terms of assembly, isoform Mocs1a and isoform Mocs1b probably form a heterooligomer. [4Fe-4S] cluster serves as cofactor.

It carries out the reaction GTP + AH2 + S-adenosyl-L-methionine = (8S)-3',8-cyclo-7,8-dihydroguanosine 5'-triphosphate + 5'-deoxyadenosine + L-methionine + A + H(+). The enzyme catalyses (8S)-3',8-cyclo-7,8-dihydroguanosine 5'-triphosphate = cyclic pyranopterin phosphate + diphosphate. It functions in the pathway cofactor biosynthesis; molybdopterin biosynthesis. Functionally, isoform Mocs1a and isoform Mocs1b probably form a complex that catalyzes the conversion of 5'-GTP to cyclic pyranopterin monophosphate (cPMP). Mocs1a catalyzes the cyclization of GTP to (8S)-3',8-cyclo-7,8-dihydroguanosine 5'-triphosphate and Mocs1b catalyzes the subsequent conversion of (8S)-3',8-cyclo-7,8-dihydroguanosine 5'-triphosphate to cPMP. The sequence is that of Molybdenum cofactor biosynthesis protein 1 (Mocs1) from Mus musculus (Mouse).